The sequence spans 361 residues: Alternative oxidase, mitochondrial (361 aa).

The chain crosses the membrane as a helical span at residues 156 to 178 (YLVRNVFLESVAGVPGMVAGMLR). E164, E203, and H206 together coordinate Fe cation. Residues 218 to 240 (WFMRLAVLGAQGVFFNAMFLSYL) form a helical membrane-spanning segment. Fe cation-binding residues include E254, E309, and H312. Positions 318–328 (TLGNLDQNSDP) are enriched in polar residues. The tract at residues 318 to 361 (TLGNLDQNSDPNPYASKYDNPNVPHPRKDIKYLKPSGWEREEVM) is disordered. Positions 343–361 (PRKDIKYLKPSGWEREEVM) are enriched in basic and acidic residues.

Belongs to the alternative oxidase family. Fe cation serves as cofactor.

Its subcellular location is the mitochondrion inner membrane. Functionally, catalyzes cyanide-resistant oxygen consumption. May increase respiration when the cytochrome respiratory pathway is restricted, or in response to low temperatures. The chain is Alternative oxidase, mitochondrial (AOX1) from Venturia inaequalis (Apple scab fungus).